The following is a 148-amino-acid chain: Glutamyl-tRNA(Gln) amidotransferase subunit C, mitochondrial (148 aa).

The transit peptide at 1–10 (MLRLLNKRFY) directs the protein to the mitochondrion.

This sequence belongs to the GatC family. As to quaternary structure, subunit of the heterotrimeric GatCAB amidotransferase (AdT) complex, composed of A, B and C subunits.

The protein localises to the mitochondrion. It carries out the reaction L-glutamyl-tRNA(Gln) + L-glutamine + ATP + H2O = L-glutaminyl-tRNA(Gln) + L-glutamate + ADP + phosphate + H(+). Allows the formation of correctly charged Gln-tRNA(Gln) through the transamidation of misacylated Glu-tRNA(Gln) in the mitochondria. The reaction takes place in the presence of glutamine and ATP through an activated gamma-phospho-Glu-tRNA(Gln). This Drosophila ananassae (Fruit fly) protein is Glutamyl-tRNA(Gln) amidotransferase subunit C, mitochondrial.